A 707-amino-acid chain; its full sequence is Probable potassium transporter 17 (707 aa).

Positions 1-25 (MDLEAGSIRPRSDGEGGGPAAGRET) are disordered. At 1 to 34 (MDLEAGSIRPRSDGEGGGPAAGRETDDSNVWKDL) the chain is on the cytoplasmic side. A helical membrane pass occupies residues 35 to 55 (FLAYKTLGVVFGGLVTSPLYV). Topologically, residues 56–71 (YPSMNLSSPTEADYLG) are extracellular. Asn-60 carries an N-linked (GlcNAc...) asparagine glycan. The chain crosses the membrane as a helical span at residues 72–92 (IYSIMFWTLTLIGVVKYVCIA). At 93–157 (LNADDHGEGG…FFEQSITARR (65 aa)) the chain is on the cytoplasmic side. Residues 158–178 (VLLFVAVLGMCMLIGDGILTP) traverse the membrane as a helical segment. The Extracellular portion of the chain corresponds to 179-194 (AISVLSAIDGIRGPFP). Residues 195 to 215 (TVSKPVVEALSAAILIGLFLL) form a helical membrane-spanning segment. Residues 216-222 (QKYGTSK) lie on the Cytoplasmic side of the membrane. The chain crosses the membrane as a helical span at residues 223–243 (VSFLFSPIMAAWTFTTPIIGL). Over 244-276 (YSIVHYYPGIFKAISPYYIVHFFLRNKRQGWQL) the chain is Extracellular. A helical membrane pass occupies residues 277 to 297 (LGGTVLCITGAEAMFADLGHF). Residues 298–305 (SKKAIQIA) lie on the Cytoplasmic side of the membrane. The helical transmembrane segment at 306–326 (FLSSIYPSLVLTYAGQTAYLI) threads the bilayer. The Extracellular segment spans residues 327–343 (NNVNDFGDGFYKFVPRP). The helical transmembrane segment at 344 to 364 (VYWPMFVVATLAAIVASQSLI) threads the bilayer. Residues 365–402 (SATFSVIKQSVVLDYFPRVKVVHTSQHKEGEVYSPEIN) are Cytoplasmic-facing. The chain crosses the membrane as a helical span at residues 403-423 (YILMVLCVGVILGFGGGKAIG). Residues 424 to 427 (NAFG) are Extracellular-facing. Residues 428-448 (VVVIMVMLITTVLLTLVMIII) form a helical membrane-spanning segment. Residues 449–454 (WRTPLV) are Cytoplasmic-facing. A helical transmembrane segment spans residues 455–475 (LAGLYFVPFFIMEGAYVSAVF). Residues 476–480 (TKIPE) lie on the Extracellular side of the membrane. A helical transmembrane segment spans residues 481 to 501 (GGWLPFAVSITLAMIMFGWYY). Topologically, residues 502–707 (GRQRKFEYEM…RVEIGMLYKV (206 aa)) are cytoplasmic.

This sequence belongs to the HAK/KUP transporter (TC 2.A.72.3) family.

The protein resides in the membrane. Its function is as follows. High-affinity potassium transporter. This chain is Probable potassium transporter 17 (HAK17), found in Oryza sativa subsp. japonica (Rice).